We begin with the raw amino-acid sequence, 281 residues long: MITTQEISQIRQQVRAWHAKGETVAFVPTMGNLHLGHITLIKEAVKRADHVVASIFVNPMQFGQNEDLDAYPRTLAADQQALSDAGAELLFTPTPEIIYPKGMEQQSFVEVPNISEQLCGASRPGHFRGVATVVCKLFNIVQPDIALFGRKDFQQLLVIETMVADLSMPIEIIGVDTIREASGLAMSSRNGYLSQDQKDRAATLKRTMDTMSAAIQQGESIQDVIQAGHSQLSEAGFRPDYLEVRSTSDLSPASSEDSSLVILAAAYMGDTRLIDNLCFTR.

An ATP-binding site is contributed by methionine 30–histidine 37. Histidine 37 functions as the Proton donor in the catalytic mechanism. Residue glutamine 61 coordinates (R)-pantoate. Glutamine 61 contributes to the beta-alanine binding site. Glycine 149–aspartate 152 contributes to the ATP binding site. Position 155 (glutamine 155) interacts with (R)-pantoate. Residues isoleucine 178 and methionine 186 to arginine 189 each bind ATP.

The protein belongs to the pantothenate synthetase family. Homodimer.

The protein localises to the cytoplasm. The enzyme catalyses (R)-pantoate + beta-alanine + ATP = (R)-pantothenate + AMP + diphosphate + H(+). It participates in cofactor biosynthesis; (R)-pantothenate biosynthesis; (R)-pantothenate from (R)-pantoate and beta-alanine: step 1/1. Functionally, catalyzes the condensation of pantoate with beta-alanine in an ATP-dependent reaction via a pantoyl-adenylate intermediate. In Shewanella sediminis (strain HAW-EB3), this protein is Pantothenate synthetase.